The primary structure comprises 61 residues: Small ribosomal subunit protein uS14B (61 aa).

Residues cysteine 24, cysteine 27, cysteine 40, and cysteine 43 each contribute to the Zn(2+) site.

The protein belongs to the universal ribosomal protein uS14 family. Zinc-binding uS14 subfamily. As to quaternary structure, part of the 30S ribosomal subunit. Contacts proteins S3 and S10. It depends on Zn(2+) as a cofactor.

In terms of biological role, binds 16S rRNA, required for the assembly of 30S particles and may also be responsible for determining the conformation of the 16S rRNA at the A site. The chain is Small ribosomal subunit protein uS14B from Mycobacterium ulcerans (strain Agy99).